The following is a 791-amino-acid chain: Phosphoenolpyruvate synthase (791 aa).

Residue T416 is modified to Phosphothreonine. Catalysis depends on H418, which acts as the Tele-phosphohistidine intermediate. R508, R575, E677, G698, S699, N700, and D701 together coordinate substrate. E677 is a Mg(2+) binding site. D701 contributes to the Mg(2+) binding site. Y744 carries the phosphotyrosine modification. The active-site Proton donor is C748.

This sequence belongs to the PEP-utilizing enzyme family. It depends on Mg(2+) as a cofactor.

The enzyme catalyses pyruvate + ATP + H2O = phosphoenolpyruvate + AMP + phosphate + 2 H(+). It functions in the pathway carbohydrate biosynthesis; gluconeogenesis. Functionally, catalyzes the phosphorylation of pyruvate to phosphoenolpyruvate. In Pseudomonas aeruginosa (strain UCBPP-PA14), this protein is Phosphoenolpyruvate synthase (ppsA).